The sequence spans 431 residues: Glucose-1-phosphate adenylyltransferase (431 aa).

Position 39 (Lys-39) interacts with beta-D-fructose 1,6-bisphosphate. Arg-40, His-46, and Arg-52 together coordinate AMP. Tyr-114 is a binding site for alpha-D-glucose 1-phosphate. Arg-130 contacts AMP. Residues Gly-179, 194-195 (EK), and Ser-212 each bind alpha-D-glucose 1-phosphate. AMP contacts are provided by Glu-370 and Arg-386. Residues 419–423 (REMLR) and 429–431 (QER) contribute to the beta-D-fructose 1,6-bisphosphate site.

It belongs to the bacterial/plant glucose-1-phosphate adenylyltransferase family. In terms of assembly, homotetramer.

It catalyses the reaction alpha-D-glucose 1-phosphate + ATP + H(+) = ADP-alpha-D-glucose + diphosphate. It functions in the pathway glycan biosynthesis; glycogen biosynthesis. Allosterically activated by fructose-1,6-bisphosphate (F16BP) and inhibited by AMP. Functionally, involved in the biosynthesis of ADP-glucose, a building block required for the elongation reactions to produce glycogen. Catalyzes the reaction between ATP and alpha-D-glucose 1-phosphate (G1P) to produce pyrophosphate and ADP-Glc. The protein is Glucose-1-phosphate adenylyltransferase of Salmonella arizonae (strain ATCC BAA-731 / CDC346-86 / RSK2980).